The chain runs to 187 residues: HTH-type dhaKLM operon transcriptional activator DhaS (187 aa).

The region spanning 12-72 is the HTH tetR-type domain; the sequence is IITQKIIAKA…WIFENDFAEL (61 aa). Positions 35 to 54 form a DNA-binding region, H-T-H motif; that stretch reads SVSDIMQTAKIRRQTFYNYF.

Homodimer. Interacts with a homodimer of DhaQ.

In terms of biological role, in complex with DhaQ, upon activation by dihydroxyacetone, activates transcription of the dhaKLM operon. Binds the inverted repeat sequence 5'-GGACACATN(6)ATTTGTCC-3' located upstream of and partially overlapping with the -35 promoter sequence of the dhaKLM operon promoter. In Lactococcus lactis subsp. lactis (strain IL1403) (Streptococcus lactis), this protein is HTH-type dhaKLM operon transcriptional activator DhaS (dhaS).